We begin with the raw amino-acid sequence, 717 residues long: Glutamate--cysteine ligase (717 aa).

The segment at 484–576 (SKTTEQRAAK…TDSDHTDTDD (93 aa)) is disordered. Low complexity-rich tracts occupy residues 492–518 (AKAQ…NGNG) and 551–567 (GTTN…SNGT).

Belongs to the glutamate--cysteine ligase type 3 family.

The catalysed reaction is L-cysteine + L-glutamate + ATP = gamma-L-glutamyl-L-cysteine + ADP + phosphate + H(+). The enzyme catalyses (2S)-2-aminobutanoate + L-glutamate + ATP = gamma-L-glutamyl-(2S)-2-aminobutanoate + ADP + phosphate + H(+). It functions in the pathway sulfur metabolism; glutathione biosynthesis; glutathione from L-cysteine and L-glutamate: step 1/2. In terms of biological role, catalyzes the ATP-dependent ligation of L-glutamate and L-cysteine and participates in the first and rate-limiting step in glutathione biosynthesis. This Drosophila melanogaster (Fruit fly) protein is Glutamate--cysteine ligase.